Here is a 248-residue protein sequence, read N- to C-terminus: UPF0246 protein RF_0769 (248 aa).

It belongs to the UPF0246 family.

This is UPF0246 protein RF_0769 from Rickettsia felis (strain ATCC VR-1525 / URRWXCal2) (Rickettsia azadi).